The chain runs to 372 residues: N-methyl-L-tryptophan oxidase (372 aa).

An FAD-binding site is contributed by 4–34 (DLIIIGSGSVGAAAGYYATRAGLNVLMTDAH). The residue at position 308 (C308) is an S-8alpha-FAD cysteine.

It belongs to the MSOX/MTOX family. MTOX subfamily. Monomer. The cofactor is FAD.

The catalysed reaction is N(alpha)-methyl-L-tryptophan + O2 + H2O = L-tryptophan + formaldehyde + H2O2. Catalyzes the oxidative demethylation of N-methyl-L-tryptophan. The protein is N-methyl-L-tryptophan oxidase of Escherichia coli O139:H28 (strain E24377A / ETEC).